A 217-amino-acid polypeptide reads, in one-letter code: 3,4-dihydroxy-2-butanone 4-phosphate synthase (217 aa).

D-ribulose 5-phosphate-binding positions include arginine 37–glutamate 38, aspartate 42, arginine 150–threonine 154, and glutamate 174. Glutamate 38 contacts Mg(2+). Histidine 153 lines the Mg(2+) pocket.

Belongs to the DHBP synthase family. In terms of assembly, homodimer. Requires Mg(2+) as cofactor. It depends on Mn(2+) as a cofactor.

It catalyses the reaction D-ribulose 5-phosphate = (2S)-2-hydroxy-3-oxobutyl phosphate + formate + H(+). Its pathway is cofactor biosynthesis; riboflavin biosynthesis; 2-hydroxy-3-oxobutyl phosphate from D-ribulose 5-phosphate: step 1/1. Catalyzes the conversion of D-ribulose 5-phosphate to formate and 3,4-dihydroxy-2-butanone 4-phosphate. This Photorhabdus laumondii subsp. laumondii (strain DSM 15139 / CIP 105565 / TT01) (Photorhabdus luminescens subsp. laumondii) protein is 3,4-dihydroxy-2-butanone 4-phosphate synthase.